A 94-amino-acid chain; its full sequence is Acylphosphatase (94 aa).

Residues 5-94 (RLTAFVHGHV…PRDVEGFVER (90 aa)) enclose the Acylphosphatase-like domain. Active-site residues include Arg-20 and Asn-38.

The protein belongs to the acylphosphatase family.

The catalysed reaction is an acyl phosphate + H2O = a carboxylate + phosphate + H(+). The protein is Acylphosphatase (acyP) of Corynebacterium glutamicum (strain R).